Here is a 287-residue protein sequence, read N- to C-terminus: Pyridoxal kinase PdxY (287 aa).

Residues Ser9 and 44–45 (MQ) each bind substrate. The ATP site is built by Asp111, Ala142, Glu147, and Lys180. Asp221 contacts substrate.

This sequence belongs to the pyridoxine kinase family. PdxY subfamily. In terms of assembly, homodimer. It depends on Mg(2+) as a cofactor.

The catalysed reaction is pyridoxal + ATP = pyridoxal 5'-phosphate + ADP + H(+). It participates in cofactor metabolism; pyridoxal 5'-phosphate salvage; pyridoxal 5'-phosphate from pyridoxal: step 1/1. In terms of biological role, pyridoxal kinase involved in the salvage pathway of pyridoxal 5'-phosphate (PLP). Catalyzes the phosphorylation of pyridoxal to PLP. The sequence is that of Pyridoxal kinase PdxY from Burkholderia thailandensis (strain ATCC 700388 / DSM 13276 / CCUG 48851 / CIP 106301 / E264).